A 266-amino-acid polypeptide reads, in one-letter code: Undecaprenyl-diphosphatase (266 aa).

A run of 8 helical transmembrane segments spans residues 4-24, 46-66, 82-102, 105-125, 142-162, 182-202, 216-236, and 244-264; these read WLIA…PVSS, VLIQ…RLWG, IGIL…HDFI, VLYE…FILL, YPLK…VPGV, AAEF…AYDL, LIGI…KTVL, and FAPF…LLYI.

Belongs to the UppP family.

It localises to the cell inner membrane. It carries out the reaction di-trans,octa-cis-undecaprenyl diphosphate + H2O = di-trans,octa-cis-undecaprenyl phosphate + phosphate + H(+). Catalyzes the dephosphorylation of undecaprenyl diphosphate (UPP). Confers resistance to bacitracin. In Caulobacter vibrioides (strain ATCC 19089 / CIP 103742 / CB 15) (Caulobacter crescentus), this protein is Undecaprenyl-diphosphatase.